The primary structure comprises 338 residues: UDP-3-O-acylglucosamine N-acyltransferase (338 aa).

His-251 (proton acceptor) is an active-site residue.

The protein belongs to the transferase hexapeptide repeat family. LpxD subfamily. In terms of assembly, homotrimer.

The catalysed reaction is a UDP-3-O-[(3R)-3-hydroxyacyl]-alpha-D-glucosamine + a (3R)-hydroxyacyl-[ACP] = a UDP-2-N,3-O-bis[(3R)-3-hydroxyacyl]-alpha-D-glucosamine + holo-[ACP] + H(+). Its pathway is bacterial outer membrane biogenesis; LPS lipid A biosynthesis. Catalyzes the N-acylation of UDP-3-O-acylglucosamine using 3-hydroxyacyl-ACP as the acyl donor. Is involved in the biosynthesis of lipid A, a phosphorylated glycolipid that anchors the lipopolysaccharide to the outer membrane of the cell. The chain is UDP-3-O-acylglucosamine N-acyltransferase from Psychrobacter arcticus (strain DSM 17307 / VKM B-2377 / 273-4).